We begin with the raw amino-acid sequence, 290 residues long: Ribosomal RNA small subunit methyltransferase A (290 aa).

Positions 27, 29, 54, 75, 100, and 125 each coordinate S-adenosyl-L-methionine.

This sequence belongs to the class I-like SAM-binding methyltransferase superfamily. rRNA adenine N(6)-methyltransferase family. RsmA subfamily.

Its subcellular location is the cytoplasm. It catalyses the reaction adenosine(1518)/adenosine(1519) in 16S rRNA + 4 S-adenosyl-L-methionine = N(6)-dimethyladenosine(1518)/N(6)-dimethyladenosine(1519) in 16S rRNA + 4 S-adenosyl-L-homocysteine + 4 H(+). Functionally, specifically dimethylates two adjacent adenosines (A1518 and A1519) in the loop of a conserved hairpin near the 3'-end of 16S rRNA in the 30S particle. May play a critical role in biogenesis of 30S subunits. This Streptococcus equi subsp. zooepidemicus (strain H70) protein is Ribosomal RNA small subunit methyltransferase A.